A 155-amino-acid chain; its full sequence is 6,7-dimethyl-8-ribityllumazine synthase (155 aa).

5-amino-6-(D-ribitylamino)uracil is bound by residues phenylalanine 23, 57–59 (AFE), and 81–83 (AVI). 86-87 (ST) contacts (2S)-2-hydroxy-3-oxobutyl phosphate. Histidine 89 functions as the Proton donor in the catalytic mechanism. Residue phenylalanine 114 participates in 5-amino-6-(D-ribitylamino)uracil binding. Arginine 128 contributes to the (2S)-2-hydroxy-3-oxobutyl phosphate binding site.

It belongs to the DMRL synthase family.

The enzyme catalyses (2S)-2-hydroxy-3-oxobutyl phosphate + 5-amino-6-(D-ribitylamino)uracil = 6,7-dimethyl-8-(1-D-ribityl)lumazine + phosphate + 2 H2O + H(+). Its pathway is cofactor biosynthesis; riboflavin biosynthesis; riboflavin from 2-hydroxy-3-oxobutyl phosphate and 5-amino-6-(D-ribitylamino)uracil: step 1/2. Catalyzes the formation of 6,7-dimethyl-8-ribityllumazine by condensation of 5-amino-6-(D-ribitylamino)uracil with 3,4-dihydroxy-2-butanone 4-phosphate. This is the penultimate step in the biosynthesis of riboflavin. The polypeptide is 6,7-dimethyl-8-ribityllumazine synthase (Geobacter sp. (strain M21)).